The sequence spans 75 residues: U6-lycotoxin-Ls1d (75 aa).

Residues 1–21 form the signal peptide; sequence MKLLLFTALVLVVISLVEVEA. Positions 22-25 are excised as a propeptide; it reads ENER.

The protein belongs to the neurotoxin 19 (CSTX) family. 06 (U6-Lctx) subfamily. Contains 4 disulfide bonds. Expressed by the venom gland.

The protein localises to the secreted. This is U6-lycotoxin-Ls1d from Lycosa singoriensis (Wolf spider).